The primary structure comprises 96 residues: Aspartyl/glutamyl-tRNA(Asn/Gln) amidotransferase subunit C (96 aa).

It belongs to the GatC family. In terms of assembly, heterotrimer of A, B and C subunits.

The catalysed reaction is L-glutamyl-tRNA(Gln) + L-glutamine + ATP + H2O = L-glutaminyl-tRNA(Gln) + L-glutamate + ADP + phosphate + H(+). The enzyme catalyses L-aspartyl-tRNA(Asn) + L-glutamine + ATP + H2O = L-asparaginyl-tRNA(Asn) + L-glutamate + ADP + phosphate + 2 H(+). Allows the formation of correctly charged Asn-tRNA(Asn) or Gln-tRNA(Gln) through the transamidation of misacylated Asp-tRNA(Asn) or Glu-tRNA(Gln) in organisms which lack either or both of asparaginyl-tRNA or glutaminyl-tRNA synthetases. The reaction takes place in the presence of glutamine and ATP through an activated phospho-Asp-tRNA(Asn) or phospho-Glu-tRNA(Gln). The polypeptide is Aspartyl/glutamyl-tRNA(Asn/Gln) amidotransferase subunit C (Neisseria gonorrhoeae (strain ATCC 700825 / FA 1090)).